The following is a 409-amino-acid chain: Elongation factor Tu, chloroplastic (409 aa).

The tr-type G domain maps to 10–214; that stretch reads KPHVNIGTIG…AVDEYIPTPE (205 aa). Residues 19-26 are G1; that stretch reads GHVDHGKT. Residue 19 to 26 coordinates GTP; it reads GHVDHGKT. Threonine 26 provides a ligand contact to Mg(2+). Residues 60 to 64 form a G2 region; sequence GITIN. The tract at residues 81–84 is G3; the sequence is DCPG. GTP contacts are provided by residues 81-85 and 136-139; these read DCPGH and NKED. Residues 136-139 are G4; sequence NKED. A G5 region spans residues 174-176; that stretch reads SAL.

Belongs to the TRAFAC class translation factor GTPase superfamily. Classic translation factor GTPase family. EF-Tu/EF-1A subfamily.

The protein localises to the plastid. It is found in the chloroplast. The enzyme catalyses GTP + H2O = GDP + phosphate + H(+). In terms of biological role, GTP hydrolase that promotes the GTP-dependent binding of aminoacyl-tRNA to the A-site of ribosomes during protein biosynthesis. The protein is Elongation factor Tu, chloroplastic (tufA) of Trieres chinensis (Marine centric diatom).